The sequence spans 143 residues: MKVEVVVEVRHTENKQKVIHALENIFTPKKIEEKRSDVGTVLIASCEGHECLEKLRSAIWRQGIQDAARSVIARGIVAEDTVVFSVNKQAAYAGVVSFVTEPNESPLGPITFTVKTSNTRQFLDWIAPRTYRGRVYYQAPPPD.

This sequence belongs to the UPF0201 family.

This chain is UPF0201 protein Pars_1985, found in Pyrobaculum arsenaticum (strain DSM 13514 / JCM 11321 / PZ6).